We begin with the raw amino-acid sequence, 192 residues long: uncharacterized protein (192 aa).

6 helical membrane passes run 5–22 (VPPL…GIGL), 42–61 (FLFL…HYVY), 66–88 (LRFL…SGKL), 101–118 (WGLL…ALNL), 122–139 (LVMW…STIL), and 159–181 (ALLL…LWLF).

The protein resides in the cell membrane. This is an uncharacterized protein from Treponema pallidum (strain Nichols).